Here is a 355-residue protein sequence, read N- to C-terminus: 3-dehydroquinate synthase (355 aa).

Residues 71 to 76, 105 to 109, 129 to 130, lysine 142, and lysine 151 contribute to the NAD(+) site; these read EGEASK, GVVGD, and TS. Residues glutamate 184, histidine 246, and histidine 263 each coordinate Zn(2+).

This sequence belongs to the sugar phosphate cyclases superfamily. Dehydroquinate synthase family. Requires Co(2+) as cofactor. Zn(2+) serves as cofactor. The cofactor is NAD(+).

The protein resides in the cytoplasm. It carries out the reaction 7-phospho-2-dehydro-3-deoxy-D-arabino-heptonate = 3-dehydroquinate + phosphate. The protein operates within metabolic intermediate biosynthesis; chorismate biosynthesis; chorismate from D-erythrose 4-phosphate and phosphoenolpyruvate: step 2/7. In terms of biological role, catalyzes the conversion of 3-deoxy-D-arabino-heptulosonate 7-phosphate (DAHP) to dehydroquinate (DHQ). This chain is 3-dehydroquinate synthase, found in Streptococcus gordonii (strain Challis / ATCC 35105 / BCRC 15272 / CH1 / DL1 / V288).